The primary structure comprises 486 residues: MQWEVVIGLETHTQLTTKTKIFSGSPTRFGAAPNTQTSPVDLALPGALPVMNRSAVERAIQFGLAIGATIAPYSVFARKNYFYPDLPKGYQISQMDLPIVQGGRVSFAMEVDGKTEIRSVQLTRAHLEEDAGKSLHEDYHGMTGIDLNRAGTPLLEIVTEPDMRSAAEAVAYAKALHTLVTWIGICDGNMQEGSFRCDANVSVRPVGQKEYGTRCEIKNLNSFRFMEDAINYEVRRQIELIEDGGRVVQATRLYDPDKKETREMRSKENAHDYRYFPDPDLPPLVVSAEWITRVQAEMPELPGAMRERFTREYGLSDYDAAVLTQSKAMANYFELICSIAGHEQAKPAANLLMGDVASAVNRDGIELDAAPVSAAQLAVLLHRIADGTISNKIAKEVFGAMWEAKSDSPTIADELIESKGLKQISDSGALEKIVDDVLAANTKSVEEFRAGKEQAINALMGQAMKASKGKANPAQLTELLKKKLSA.

Belongs to the GatB/GatE family. GatB subfamily. In terms of assembly, heterotrimer of A, B and C subunits.

It carries out the reaction L-glutamyl-tRNA(Gln) + L-glutamine + ATP + H2O = L-glutaminyl-tRNA(Gln) + L-glutamate + ADP + phosphate + H(+). The enzyme catalyses L-aspartyl-tRNA(Asn) + L-glutamine + ATP + H2O = L-asparaginyl-tRNA(Asn) + L-glutamate + ADP + phosphate + 2 H(+). Its function is as follows. Allows the formation of correctly charged Asn-tRNA(Asn) or Gln-tRNA(Gln) through the transamidation of misacylated Asp-tRNA(Asn) or Glu-tRNA(Gln) in organisms which lack either or both of asparaginyl-tRNA or glutaminyl-tRNA synthetases. The reaction takes place in the presence of glutamine and ATP through an activated phospho-Asp-tRNA(Asn) or phospho-Glu-tRNA(Gln). This Herminiimonas arsenicoxydans protein is Aspartyl/glutamyl-tRNA(Asn/Gln) amidotransferase subunit B.